We begin with the raw amino-acid sequence, 160 residues long: Class B acid phosphatase (160 aa).

The signal sequence occupies residues 1–23 (MRKVTLTLSAIALALSLNGAAMA). Asp69 acts as the Nucleophile in catalysis. Residues Asp69 and Asp71 each coordinate Mg(2+). Residue Asp71 is the Proton donor of the active site. 137-138 (TG) contacts substrate.

The protein belongs to the class B bacterial acid phosphatase family. In terms of assembly, homotetramer. The cofactor is Mg(2+).

It localises to the periplasm. It carries out the reaction a phosphate monoester + H2O = an alcohol + phosphate. In terms of biological role, dephosphorylates several organic phosphate monoesters. Also has a phosphotransferase activity catalyzing the transfer of low-energy phosphate groups from organic phosphate monoesters to free hydroxyl groups of various organic compounds. This chain is Class B acid phosphatase (aphA), found in Proteus mirabilis.